Consider the following 388-residue polypeptide: LL-diaminopimelate aminotransferase (388 aa).

Tyr-16 and Gly-41 together coordinate substrate. Pyridoxal 5'-phosphate contacts are provided by residues Tyr-70, 104–105 (SK), Tyr-129, Asn-179, Tyr-210, and 239–241 (SLS). The substrate site is built by Lys-105, Tyr-129, and Asn-179. Residue Lys-242 is modified to N6-(pyridoxal phosphate)lysine. Arg-250 provides a ligand contact to pyridoxal 5'-phosphate. Arg-368 contributes to the substrate binding site.

This sequence belongs to the class-I pyridoxal-phosphate-dependent aminotransferase family. LL-diaminopimelate aminotransferase subfamily. As to quaternary structure, homodimer. Pyridoxal 5'-phosphate serves as cofactor.

The enzyme catalyses (2S,6S)-2,6-diaminopimelate + 2-oxoglutarate = (S)-2,3,4,5-tetrahydrodipicolinate + L-glutamate + H2O + H(+). It participates in amino-acid biosynthesis; L-lysine biosynthesis via DAP pathway; LL-2,6-diaminopimelate from (S)-tetrahydrodipicolinate (aminotransferase route): step 1/1. In terms of biological role, involved in the synthesis of meso-diaminopimelate (m-DAP or DL-DAP), required for both lysine and peptidoglycan biosynthesis. Catalyzes the direct conversion of tetrahydrodipicolinate to LL-diaminopimelate. The chain is LL-diaminopimelate aminotransferase from Nitratidesulfovibrio vulgaris (strain ATCC 29579 / DSM 644 / CCUG 34227 / NCIMB 8303 / VKM B-1760 / Hildenborough) (Desulfovibrio vulgaris).